We begin with the raw amino-acid sequence, 345 residues long: Phosphoribosylformylglycinamidine cyclo-ligase (345 aa).

It belongs to the AIR synthase family.

It is found in the cytoplasm. The catalysed reaction is 2-formamido-N(1)-(5-O-phospho-beta-D-ribosyl)acetamidine + ATP = 5-amino-1-(5-phospho-beta-D-ribosyl)imidazole + ADP + phosphate + H(+). It functions in the pathway purine metabolism; IMP biosynthesis via de novo pathway; 5-amino-1-(5-phospho-D-ribosyl)imidazole from N(2)-formyl-N(1)-(5-phospho-D-ribosyl)glycinamide: step 2/2. The chain is Phosphoribosylformylglycinamidine cyclo-ligase from Actinobacillus succinogenes (strain ATCC 55618 / DSM 22257 / CCUG 43843 / 130Z).